Here is a 224-residue protein sequence, read N- to C-terminus: UPF0758 protein Maqu_3564 (224 aa).

Residues 102-224 (PLRSPADTRR…VISLAERGLM (123 aa)) enclose the MPN domain. Zn(2+) contacts are provided by H173, H175, and D186. The JAMM motif signature appears at 173–186 (HNHPSGVAEPSQAD).

The protein belongs to the UPF0758 family.

The polypeptide is UPF0758 protein Maqu_3564 (Marinobacter nauticus (strain ATCC 700491 / DSM 11845 / VT8) (Marinobacter aquaeolei)).